The primary structure comprises 391 residues: MALVRWRLRRGNFHLLSRVLLLKLTVVIISVLLFCEYFIYHLVIFQCHWPEVKTLAHGDRQKPVLKAMFLADTHLLGEIRGHWLDKLRREWQMERAFQTALWWLQPEVIFILGDIFDEGKWSTTEAWADDVQRFRKIFRHGSHVQLKVVIGNHDIGFHYQMSKYRIKRFEKVFSSERLFSWKGVNFVMVNSVAMEGDGCSICSEAEAELREISRKLNCSREVQGSSQCEGEQRLPFSAPVLLQHYPLYRASDANCSGEDAAPPEERNVPFEEKYDVLSREASQKLLWWLQPRLVLSGHTHSACEVLHPGGVPEVSVPSFSWRNRNNPSFIMGSLTSKDYALSKCYLPFEDRVLATYGAAAVFLVVLILAHLERLPSSFLFGWKLRKMHMRG.

Residues 25 to 45 form a helical membrane-spanning segment; the sequence is TVVIISVLLFCEYFIYHLVIF. Residues Asp-72, Asp-114, Asn-152, His-244, His-298, and His-300 each coordinate a divalent metal cation. The chain crosses the membrane as a helical span at residues 352–372; sequence VLATYGAAAVFLVVLILAHLE.

It belongs to the metallophosphoesterase superfamily. MPPE1 family. In terms of assembly, interacts with GPI-anchor proteins (via the GPI portion). Interacts with TMED10. The cofactor is Mn(2+).

The protein localises to the endoplasmic reticulum-Golgi intermediate compartment membrane. Functionally, metallophosphoesterase that catalyzes the removal of a side-chain ethanolamine-phosphate (EtNP) from the second mannose of the GPI-anchor protein intermediate. Participates in the glycan remodeling steps of GPI-anchor maturation to allow an efficient transport of GPI-anchor proteins from the endoplasmic reticulum to the Golgi. This is Metallophosphoesterase 1 from Cricetulus griseus (Chinese hamster).